Consider the following 129-residue polypeptide: MSAEKKPASKAPAEKKPAAKKTAPSADGKKRTKARKETYSSYIYKVLKQTHPDTGISQKSMSILNSFVNDIFERIASEASKLAAYNKKSTISAREIQTAVRLILPGELAKHAVSEGTRAVTKYSSSTQA.

Over residues 1–17 the composition is skewed to basic and acidic residues; the sequence is MSAEKKPASKAPAEKKP. Residues 1 to 35 form a disordered region; it reads MSAEKKPASKAPAEKKPAAKKTAPSADGKKRTKAR. K5 and K6 each carry N6-acetyllysine; alternate. Glycyl lysine isopeptide (Lys-Gly) (interchain with G-Cter in SUMO); alternate cross-links involve residues K5 and K6. S9 carries the phosphoserine modification. Position 10 is an N6-acetyllysine (K10). K15 is subject to N6-acetyllysine; alternate. Residue K15 forms a Glycyl lysine isopeptide (Lys-Gly) (interchain with G-Cter in SUMO); alternate linkage. Residue K16 forms a Glycyl lysine isopeptide (Lys-Gly) (interchain with G-Cter in SUMO) linkage. A Glycyl lysine isopeptide (Lys-Gly) (interchain with G-Cter in ubiquitin) cross-link involves residue K122.

This sequence belongs to the histone H2B family. In terms of assembly, the nucleosome is a histone octamer containing two molecules each of H2A, H2B, H3 and H4 assembled in one H3-H4 heterotetramer and two H2A-H2B heterodimers. The octamer wraps approximately 147 bp of DNA. Post-translationally, monoubiquitinated by the UBC2-BRE1 complex to form H2BK123ub1. H2BK123ub1 gives a specific tag for epigenetic transcriptional activation and is also prerequisite for H3K4me and H3K79me formation. H2BK123ub1 also modulates the formation of double-strand breaks during meiosis and is a prerequisite for DNA-damage checkpoint activation. In terms of processing, phosphorylated by STE20 to form H2BS10ph during progression through meiotic prophase. May be correlated with chromosome condensation. Acetylated by GCN5 to form H2BK11ac and H2BK16ac. H2BK16ac can also be formed by ESA1. Acetylation of N-terminal lysines and particularly formation of H2BK11acK16ac has a positive effect on transcription. Post-translationally, sumoylation to form H2BK6su or H2BK7su, and probably also H2BK16su or H2BK17su, occurs preferentially near the telomeres and represses gene transcription.

The protein resides in the nucleus. It is found in the chromosome. Core component of nucleosome. Nucleosomes wrap and compact DNA into chromatin, limiting DNA accessibility to the cellular machineries which require DNA as a template. Histones thereby play a central role in transcription regulation, DNA repair, DNA replication and chromosomal stability. DNA accessibility is regulated via a complex set of post-translational modifications of histones, also called histone code, and nucleosome remodeling. The polypeptide is Histone H2B.1 (HTB1) (Candida glabrata (strain ATCC 2001 / BCRC 20586 / JCM 3761 / NBRC 0622 / NRRL Y-65 / CBS 138) (Yeast)).